Consider the following 189-residue polypeptide: Probable nicotinate-nucleotide adenylyltransferase (189 aa).

This sequence belongs to the NadD family.

It carries out the reaction nicotinate beta-D-ribonucleotide + ATP + H(+) = deamido-NAD(+) + diphosphate. It participates in cofactor biosynthesis; NAD(+) biosynthesis; deamido-NAD(+) from nicotinate D-ribonucleotide: step 1/1. Catalyzes the reversible adenylation of nicotinate mononucleotide (NaMN) to nicotinic acid adenine dinucleotide (NaAD). The chain is Probable nicotinate-nucleotide adenylyltransferase from Bacillus cereus (strain G9842).